A 313-amino-acid polypeptide reads, in one-letter code: Glutaminase (313 aa).

Serine 73, asparagine 123, glutamate 167, asparagine 174, tyrosine 198, tyrosine 249, and valine 267 together coordinate substrate.

Belongs to the glutaminase family. Homotetramer.

It carries out the reaction L-glutamine + H2O = L-glutamate + NH4(+). The polypeptide is Glutaminase (Streptomyces avermitilis (strain ATCC 31267 / DSM 46492 / JCM 5070 / NBRC 14893 / NCIMB 12804 / NRRL 8165 / MA-4680)).